We begin with the raw amino-acid sequence, 105 residues long: Secreted effector protein PINE1 (105 aa).

A signal peptide spans 1-21 (MKLSQPLSIFAILAASTVAVA).

As to quaternary structure, interacts with Arabidopsis thaliana PGIP1.

It is found in the secreted. Its function is as follows. Effector protein required for full virulence. Directly interacts with and functionally inactivates PG-inhibiting proteins (PGIPs). PGIPs are a defense mechanism of infected plants, that inhibit the plant pathogens secreted polygalacturonases (PGs) used to degrade the plant cell wall. Excerts its function by interacting with host PGIPs to negate their polygalacturonase-inhibiting function via enhanced dissociation of PGIPs from PGs. The protein is Secreted effector protein PINE1 of Sclerotinia sclerotiorum (strain ATCC 18683 / 1980 / Ss-1) (White mold).